An 80-amino-acid chain; its full sequence is Acyl carrier protein (80 aa).

In terms of domain architecture, Carrier spans 4–79; that stretch reads EEILQKVCSI…DAVKFIEEKK (76 aa). S39 carries the post-translational modification O-(pantetheine 4'-phosphoryl)serine.

This sequence belongs to the acyl carrier protein (ACP) family. Post-translationally, 4'-phosphopantetheine is transferred from CoA to a specific serine of apo-ACP by AcpS. This modification is essential for activity because fatty acids are bound in thioester linkage to the sulfhydryl of the prosthetic group.

It is found in the cytoplasm. The protein operates within lipid metabolism; fatty acid biosynthesis. Its function is as follows. Carrier of the growing fatty acid chain in fatty acid biosynthesis. This is Acyl carrier protein from Prochlorococcus marinus subsp. pastoris (strain CCMP1986 / NIES-2087 / MED4).